Consider the following 582-residue polypeptide: 15-cis-phytoene desaturase, chloroplastic/chromoplastic (582 aa).

The transit peptide at 1 to 110 (MPQIGLVSAV…FRSSPRPTKP (110 aa)) directs the protein to the chloroplast and chromoplast. FAD is bound by residues 140-141 (EA), lysine 148, 165-166 (HI), and tyrosine 171. Arginine 306 serves as a coordination point for substrate. Residues isoleucine 348 and aspartate 537 each contribute to the FAD site. Residue alanine 545 coordinates substrate. Methionine 547 contacts FAD.

This sequence belongs to the carotenoid/retinoid oxidoreductase family. As to quaternary structure, homotetramer. FAD is required as a cofactor.

It is found in the plastid. The protein resides in the chloroplast. The protein localises to the chromoplast. Its subcellular location is the membrane. The enzyme catalyses 2 a plastoquinone + 15-cis-phytoene = 9,9',15-tri-cis-zeta-carotene + 2 a plastoquinol. The protein operates within carotenoid biosynthesis; lycopene biosynthesis. With respect to regulation, inhibited by the herbicides metflurazon, difunone, fluridone and diflufenican. Functionally, converts phytoene into zeta-carotene via the intermediary of phytofluene by the symmetrical introduction of two double bonds at the C-11 and C-11' positions of phytoene with a concomitant isomerization of two neighboring double bonds at the C9 and C9' positions from trans to cis. The protein is 15-cis-phytoene desaturase, chloroplastic/chromoplastic (PDS) of Capsicum annuum (Capsicum pepper).